The following is a 185-amino-acid chain: UPF0397 protein LBA0922 (185 aa).

Helical transmembrane passes span 11 to 31 (VVAI…TSIP), 45 to 65 (FLAF…GFIG), 72 to 92 (IMYG…GWII), 111 to 131 (IILF…VVAP), and 146 to 166 (FVQG…IGTI).

The protein belongs to the UPF0397 family.

It is found in the cell membrane. This is UPF0397 protein LBA0922 from Lactobacillus acidophilus (strain ATCC 700396 / NCK56 / N2 / NCFM).